The sequence spans 180 residues: uncharacterized protein (180 aa).

This is an uncharacterized protein from Methanocaldococcus jannaschii (strain ATCC 43067 / DSM 2661 / JAL-1 / JCM 10045 / NBRC 100440) (Methanococcus jannaschii).